Reading from the N-terminus, the 497-residue chain is Probable cytosol aminopeptidase (497 aa).

Mn(2+)-binding residues include Lys-265 and Asp-270. Lys-277 is a catalytic residue. Residues Asp-288, Asp-347, and Glu-349 each coordinate Mn(2+). Arg-351 is an active-site residue.

The protein belongs to the peptidase M17 family. Mn(2+) serves as cofactor.

It localises to the cytoplasm. It catalyses the reaction Release of an N-terminal amino acid, Xaa-|-Yaa-, in which Xaa is preferably Leu, but may be other amino acids including Pro although not Arg or Lys, and Yaa may be Pro. Amino acid amides and methyl esters are also readily hydrolyzed, but rates on arylamides are exceedingly low.. The catalysed reaction is Release of an N-terminal amino acid, preferentially leucine, but not glutamic or aspartic acids.. Presumably involved in the processing and regular turnover of intracellular proteins. Catalyzes the removal of unsubstituted N-terminal amino acids from various peptides. The protein is Probable cytosol aminopeptidase of Geobacillus sp. (strain WCH70).